Consider the following 145-residue polypeptide: D-aminoacyl-tRNA deacylase (145 aa).

The Gly-cisPro motif, important for rejection of L-amino acids motif lies at 137–138; sequence GP.

This sequence belongs to the DTD family. Homodimer.

The protein resides in the cytoplasm. The catalysed reaction is glycyl-tRNA(Ala) + H2O = tRNA(Ala) + glycine + H(+). The enzyme catalyses a D-aminoacyl-tRNA + H2O = a tRNA + a D-alpha-amino acid + H(+). An aminoacyl-tRNA editing enzyme that deacylates mischarged D-aminoacyl-tRNAs. Also deacylates mischarged glycyl-tRNA(Ala), protecting cells against glycine mischarging by AlaRS. Acts via tRNA-based rather than protein-based catalysis; rejects L-amino acids rather than detecting D-amino acids in the active site. By recycling D-aminoacyl-tRNA to D-amino acids and free tRNA molecules, this enzyme counteracts the toxicity associated with the formation of D-aminoacyl-tRNA entities in vivo and helps enforce protein L-homochirality. This chain is D-aminoacyl-tRNA deacylase, found in Proteus mirabilis (strain HI4320).